The sequence spans 1065 residues: WD repeat-containing protein on Y chromosome (1065 aa).

WD repeat units lie at residues 153 to 197 (EEVT…IRTA), 326 to 365 (RVPLGVSTFFVAESHNIVVTGGPDTFVRIWDVYIPTEPSA), 369 to 408 (GHNGGIVMVFVQPEENKVYSVDYQKIIKVWDLQEHTLLQT), 459 to 498 (THAAPVSVVLYNRLFRNIVTCGLDSYIIVWDPWSGRRKII), 511 to 550 (IIDIEITAATFDPLEQFLLTGARDGTLKIWNYNNAVVVRN), 598 to 638 (FHTD…RRYS), 745 to 784 (KTGDCVLTMCTDRKNRYIYTGTAFGYIKVWHIVNYCVPEA), and 828 to 867 (AHLKAINSIAFINLPKIVFSGSHDYSCRLWTQGGRYLGTL). Basic and acidic residues predominate over residues 915–925 (PAKRAEVKAPE). 2 disordered regions span residues 915 to 936 (PAKRAEVKAPEDRDEETAQTDD) and 1024 to 1065 (GSAL…QQSE). Positions 926-936 (DRDEETAQTDD) are enriched in acidic residues.

This is WD repeat-containing protein on Y chromosome from Drosophila persimilis (Fruit fly).